Reading from the N-terminus, the 156-residue chain is 2-C-methyl-D-erythritol 2,4-cyclodiphosphate synthase (156 aa).

A divalent metal cation contacts are provided by aspartate 9 and histidine 11. 4-CDP-2-C-methyl-D-erythritol 2-phosphate is bound by residues 9–11 and 35–36; these read DAH and HS. Histidine 43 lines the a divalent metal cation pocket. Position 57–59 (57–59) interacts with 4-CDP-2-C-methyl-D-erythritol 2-phosphate; sequence DIG.

Belongs to the IspF family. As to quaternary structure, homotrimer. The cofactor is a divalent metal cation.

It carries out the reaction 4-CDP-2-C-methyl-D-erythritol 2-phosphate = 2-C-methyl-D-erythritol 2,4-cyclic diphosphate + CMP. The protein operates within isoprenoid biosynthesis; isopentenyl diphosphate biosynthesis via DXP pathway; isopentenyl diphosphate from 1-deoxy-D-xylulose 5-phosphate: step 4/6. Functionally, involved in the biosynthesis of isopentenyl diphosphate (IPP) and dimethylallyl diphosphate (DMAPP), two major building blocks of isoprenoid compounds. Catalyzes the conversion of 4-diphosphocytidyl-2-C-methyl-D-erythritol 2-phosphate (CDP-ME2P) to 2-C-methyl-D-erythritol 2,4-cyclodiphosphate (ME-CPP) with a corresponding release of cytidine 5-monophosphate (CMP). This is 2-C-methyl-D-erythritol 2,4-cyclodiphosphate synthase from Hydrogenobaculum sp. (strain Y04AAS1).